A 233-amino-acid polypeptide reads, in one-letter code: UPF0758 protein TTE0897 (233 aa).

Residues 108 to 230 (SVTSPEDVIN…GISLKEKGYY (123 aa)) form the MPN domain. Zn(2+) is bound by residues His179, His181, and Asp192. The short motif at 179 to 192 (HNHPSGDPTPSRED) is the JAMM motif element.

Belongs to the UPF0758 family.

The chain is UPF0758 protein TTE0897 from Caldanaerobacter subterraneus subsp. tengcongensis (strain DSM 15242 / JCM 11007 / NBRC 100824 / MB4) (Thermoanaerobacter tengcongensis).